Here is a 380-residue protein sequence, read N- to C-terminus: Bifunctional dihydropteroate synthase/dihydropteroate reductase (380 aa).

Positions 1–104 are dihydropteroate reductase; that stretch reads MIVKRLNPDA…SQPFGLKHLA (104 aa). The segment at 105 to 380 is dihydropteroate synthase; it reads QELKSHLKAP…KVFKSLEETD (276 aa). Positions 119–371 constitute a Pterin-binding domain; that stretch reads PQIMAVLNLT…DIDEHIDLIK (253 aa). Asn-126 serves as a coordination point for Mg(2+). (7,8-dihydropterin-6-yl)methyl diphosphate-binding positions include Asp-202, Asn-221, Asp-289, Lys-325, and 359–361; that span reads RVH.

In the C-terminal section; belongs to the DHPS family. Requires FAD as cofactor. It depends on FMN as a cofactor. Mg(2+) is required as a cofactor.

It catalyses the reaction (7,8-dihydropterin-6-yl)methyl diphosphate + 4-aminobenzoate = 7,8-dihydropteroate + diphosphate. The enzyme catalyses (6S)-5,6,7,8-tetrahydropteroate + NAD(+) = 7,8-dihydropteroate + NADH + H(+). The protein operates within cofactor biosynthesis; tetrahydrofolate biosynthesis; 7,8-dihydrofolate from 2-amino-4-hydroxy-6-hydroxymethyl-7,8-dihydropteridine diphosphate and 4-aminobenzoate: step 1/2. Its function is as follows. Bifunctional enzyme that catalyzes the formation of dihydropteroate, the immediate precursor of folic acid and the reduction of dihydropteroate to tetrahydropteroate. This is Bifunctional dihydropteroate synthase/dihydropteroate reductase from Helicobacter pylori (strain ATCC 700392 / 26695) (Campylobacter pylori).